Reading from the N-terminus, the 132-residue chain is Phosphoribosyl-AMP cyclohydrolase (132 aa).

D76 provides a ligand contact to Mg(2+). C77 serves as a coordination point for Zn(2+). Mg(2+)-binding residues include D78 and D80. Zn(2+)-binding residues include C93 and C100.

Belongs to the PRA-CH family. As to quaternary structure, homodimer. Requires Mg(2+) as cofactor. Zn(2+) serves as cofactor.

It is found in the cytoplasm. The enzyme catalyses 1-(5-phospho-beta-D-ribosyl)-5'-AMP + H2O = 1-(5-phospho-beta-D-ribosyl)-5-[(5-phospho-beta-D-ribosylamino)methylideneamino]imidazole-4-carboxamide. It functions in the pathway amino-acid biosynthesis; L-histidine biosynthesis; L-histidine from 5-phospho-alpha-D-ribose 1-diphosphate: step 3/9. Its function is as follows. Catalyzes the hydrolysis of the adenine ring of phosphoribosyl-AMP. This is Phosphoribosyl-AMP cyclohydrolase from Methanobrevibacter smithii (strain ATCC 35061 / DSM 861 / OCM 144 / PS).